We begin with the raw amino-acid sequence, 201 residues long: Potassium-transporting ATPase KdpC subunit (201 aa).

The helical transmembrane segment at Pro-7 to Gly-29 threads the bilayer.

It belongs to the KdpC family. In terms of assembly, the system is composed of three essential subunits: KdpA, KdpB and KdpC.

Its subcellular location is the cell inner membrane. In terms of biological role, part of the high-affinity ATP-driven potassium transport (or Kdp) system, which catalyzes the hydrolysis of ATP coupled with the electrogenic transport of potassium into the cytoplasm. This subunit acts as a catalytic chaperone that increases the ATP-binding affinity of the ATP-hydrolyzing subunit KdpB by the formation of a transient KdpB/KdpC/ATP ternary complex. The protein is Potassium-transporting ATPase KdpC subunit of Methylorubrum populi (strain ATCC BAA-705 / NCIMB 13946 / BJ001) (Methylobacterium populi).